The chain runs to 299 residues: Nucleotide-binding protein RER_30260 (299 aa).

19–26 (GLSGAGLS) lines the ATP pocket. 70 to 73 (DVRS) contributes to the GTP binding site.

It belongs to the RapZ-like family.

Functionally, displays ATPase and GTPase activities. This is Nucleotide-binding protein RER_30260 from Rhodococcus erythropolis (strain PR4 / NBRC 100887).